Reading from the N-terminus, the 339-residue chain is Methylthioribose-1-phosphate isomerase (339 aa).

Residues 50 to 52 (RGA), R84, and Q186 each bind substrate. D227 (proton donor) is an active-site residue. 237–238 (NK) contacts substrate.

This sequence belongs to the eIF-2B alpha/beta/delta subunits family. MtnA subfamily.

It catalyses the reaction 5-(methylsulfanyl)-alpha-D-ribose 1-phosphate = 5-(methylsulfanyl)-D-ribulose 1-phosphate. The protein operates within amino-acid biosynthesis; L-methionine biosynthesis via salvage pathway; L-methionine from S-methyl-5-thio-alpha-D-ribose 1-phosphate: step 1/6. Its function is as follows. Catalyzes the interconversion of methylthioribose-1-phosphate (MTR-1-P) into methylthioribulose-1-phosphate (MTRu-1-P). The polypeptide is Methylthioribose-1-phosphate isomerase (Sulfurihydrogenibium sp. (strain YO3AOP1)).